Here is a 488-residue protein sequence, read N- to C-terminus: Protein DETOXIFICATION 35 (488 aa).

12 helical membrane-spanning segments follow: residues 38 to 58 (LWMI…VSSV), 73 to 93 (AVSI…LGMG), 121 to 141 (IILF…TPVL), 150 to 170 (IAVP…SLAF), 187 to 207 (IAWI…LFII), 218 to 238 (LAFN…VIGW), 262 to 282 (IASA…IVLT), 296 to 316 (SICM…NAAI), 336 to 356 (VYVT…AIII), 379 to 401 (AYLL…VAVG), 408 to 428 (VAYI…YLLG), and 439 to 459 (WSGM…VLYK).

Belongs to the multi antimicrobial extrusion (MATE) (TC 2.A.66.1) family. In terms of tissue distribution, highly expressed in inflorescence tissues, especially in floral epidermal guard cells including those of the anthers, stigma, siliques and nectaries. Also detected in the meristematic zone of the root apex and in the elongation zone through to the fully expanded cells of the differentiation zone.

It is found in the vacuole membrane. Its function is as follows. Multidrug and toxin efflux transporter involved in flavonoid metabolism. Required for proper reproductive development. The protein is Protein DETOXIFICATION 35 of Arabidopsis thaliana (Mouse-ear cress).